The following is a 1405-amino-acid chain: DNA-directed RNA polymerase subunit beta' (1405 aa).

Positions 70, 72, 85, and 88 each coordinate Zn(2+). The Mg(2+) site is built by Asp-460, Asp-462, and Asp-464. 4 residues coordinate Zn(2+): Cys-814, Cys-888, Cys-895, and Cys-898.

It belongs to the RNA polymerase beta' chain family. In terms of assembly, the RNAP catalytic core consists of 2 alpha, 1 beta, 1 beta' and 1 omega subunit. When a sigma factor is associated with the core the holoenzyme is formed, which can initiate transcription. Mg(2+) serves as cofactor. It depends on Zn(2+) as a cofactor.

The catalysed reaction is RNA(n) + a ribonucleoside 5'-triphosphate = RNA(n+1) + diphosphate. Functionally, DNA-dependent RNA polymerase catalyzes the transcription of DNA into RNA using the four ribonucleoside triphosphates as substrates. This Shewanella woodyi (strain ATCC 51908 / MS32) protein is DNA-directed RNA polymerase subunit beta'.